The chain runs to 148 residues: Deoxyuridine 5'-triphosphate nucleotidohydrolase (148 aa).

Substrate is bound by residues 67-69 (RSG), N80, 84-86 (LID), and M94.

The protein belongs to the dUTPase family. Mg(2+) is required as a cofactor.

The enzyme catalyses dUTP + H2O = dUMP + diphosphate + H(+). The protein operates within pyrimidine metabolism; dUMP biosynthesis; dUMP from dCTP (dUTP route): step 2/2. Its function is as follows. This enzyme is involved in nucleotide metabolism: it produces dUMP, the immediate precursor of thymidine nucleotides and it decreases the intracellular concentration of dUTP so that uracil cannot be incorporated into DNA. This is Deoxyuridine 5'-triphosphate nucleotidohydrolase from Francisella philomiragia subsp. philomiragia (strain ATCC 25017 / CCUG 19701 / FSC 153 / O#319-036).